The chain runs to 102 residues: Large ribosomal subunit protein bL21 (102 aa).

The protein belongs to the bacterial ribosomal protein bL21 family. As to quaternary structure, part of the 50S ribosomal subunit. Contacts protein L20.

In terms of biological role, this protein binds to 23S rRNA in the presence of protein L20. The sequence is that of Large ribosomal subunit protein bL21 from Listeria monocytogenes serotype 4b (strain F2365).